We begin with the raw amino-acid sequence, 496 residues long: UDP-N-acetylmuramoyl-L-alanyl-D-glutamate--2,6-diaminopimelate ligase (496 aa).

UDP-N-acetyl-alpha-D-muramoyl-L-alanyl-D-glutamate-binding residues include Leu29 and Ser31. 118–124 (GTNGKTT) contributes to the ATP binding site. UDP-N-acetyl-alpha-D-muramoyl-L-alanyl-D-glutamate-binding positions include Asn159, 160-161 (TT), Ser187, Gln193, and Arg195. Lys227 bears the N6-carboxylysine mark. Meso-2,6-diaminopimelate-binding positions include Arg392, 416 to 419 (DNPR), Gly467, and Glu471. The Meso-diaminopimelate recognition motif motif lies at 416-419 (DNPR).

Belongs to the MurCDEF family. MurE subfamily. The cofactor is Mg(2+). Carboxylation is probably crucial for Mg(2+) binding and, consequently, for the gamma-phosphate positioning of ATP.

It is found in the cytoplasm. The catalysed reaction is UDP-N-acetyl-alpha-D-muramoyl-L-alanyl-D-glutamate + meso-2,6-diaminopimelate + ATP = UDP-N-acetyl-alpha-D-muramoyl-L-alanyl-gamma-D-glutamyl-meso-2,6-diaminopimelate + ADP + phosphate + H(+). Its pathway is cell wall biogenesis; peptidoglycan biosynthesis. Its function is as follows. Catalyzes the addition of meso-diaminopimelic acid to the nucleotide precursor UDP-N-acetylmuramoyl-L-alanyl-D-glutamate (UMAG) in the biosynthesis of bacterial cell-wall peptidoglycan. The polypeptide is UDP-N-acetylmuramoyl-L-alanyl-D-glutamate--2,6-diaminopimelate ligase (Wigglesworthia glossinidia brevipalpis).